The chain runs to 140 residues: Transcription antitermination protein NusB (140 aa).

Belongs to the NusB family.

In terms of biological role, involved in transcription antitermination. Required for transcription of ribosomal RNA (rRNA) genes. Binds specifically to the boxA antiterminator sequence of the ribosomal RNA (rrn) operons. The sequence is that of Transcription antitermination protein NusB from Pseudothermotoga lettingae (strain ATCC BAA-301 / DSM 14385 / NBRC 107922 / TMO) (Thermotoga lettingae).